The following is an 829-amino-acid chain: uncharacterized protein (829 aa).

The protein belongs to the IIV-6 050L family.

This is an uncharacterized protein from Invertebrate iridescent virus 3 (IIV-3).